We begin with the raw amino-acid sequence, 518 residues long: Cytochrome P450 1A1 (518 aa).

The segment at 33 to 44 (SKPRVPKGLKRL) is mitochondrial targeting signal. The O-linked (GlcNAc) serine glycan is linked to Ser-71. Phe-228 contributes to the substrate binding site. Cys-461 serves as a coordination point for heme.

It belongs to the cytochrome P450 family. As to quaternary structure, interacts with cytosolic chaperones HSP70 and HSP90; this interaction is required for initial targeting to mitochondria. Interacts (via mitochondrial targeting signal) with TOMM40 (via N-terminus); this interaction is required for translocation across the mitochondrial outer membrane. Heme serves as cofactor.

Its subcellular location is the endoplasmic reticulum membrane. The protein resides in the mitochondrion inner membrane. It localises to the microsome membrane. The protein localises to the cytoplasm. The enzyme catalyses an organic molecule + reduced [NADPH--hemoprotein reductase] + O2 = an alcohol + oxidized [NADPH--hemoprotein reductase] + H2O + H(+). It catalyses the reaction estrone + reduced [NADPH--hemoprotein reductase] + O2 = 2-hydroxyestrone + oxidized [NADPH--hemoprotein reductase] + H2O + H(+). It carries out the reaction estrone + reduced [NADPH--hemoprotein reductase] + O2 = 4-hydroxyestrone + oxidized [NADPH--hemoprotein reductase] + H2O + H(+). The catalysed reaction is estrone + reduced [NADPH--hemoprotein reductase] + O2 = 6alpha-hydroxyestrone + oxidized [NADPH--hemoprotein reductase] + H2O + H(+). The enzyme catalyses estrone + reduced [NADPH--hemoprotein reductase] + O2 = 15alpha-hydroxyestrone + oxidized [NADPH--hemoprotein reductase] + H2O + H(+). It catalyses the reaction estrone + reduced [NADPH--hemoprotein reductase] + O2 = 16alpha-hydroxyestrone + oxidized [NADPH--hemoprotein reductase] + H2O + H(+). It carries out the reaction 17beta-estradiol + reduced [NADPH--hemoprotein reductase] + O2 = 2-hydroxy-17beta-estradiol + oxidized [NADPH--hemoprotein reductase] + H2O + H(+). The catalysed reaction is 17beta-estradiol + reduced [NADPH--hemoprotein reductase] + O2 = 4-hydroxy-17beta-estradiol + oxidized [NADPH--hemoprotein reductase] + H2O + H(+). The enzyme catalyses 17beta-estradiol + reduced [NADPH--hemoprotein reductase] + O2 = 6alpha-hydroxy-17beta-estradiol + oxidized [NADPH--hemoprotein reductase] + H2O + H(+). It catalyses the reaction 17beta-estradiol + reduced [NADPH--hemoprotein reductase] + O2 = 7alpha-hydroxy-17beta-estradiol + oxidized [NADPH--hemoprotein reductase] + H2O + H(+). It carries out the reaction 17beta-estradiol + reduced [NADPH--hemoprotein reductase] + O2 = 15alpha-hydroxy-17beta-estradiol + oxidized [NADPH--hemoprotein reductase] + H2O + H(+). The catalysed reaction is (5Z,8Z,11Z)-eicosatrienoate + reduced [NADPH--hemoprotein reductase] + O2 = 19-hydroxy-(5Z,8Z,11Z)-eicosatrienoate + oxidized [NADPH--hemoprotein reductase] + H2O + H(+). The enzyme catalyses (5Z,8Z,11Z,14Z)-eicosatetraenoate + reduced [NADPH--hemoprotein reductase] + O2 = 16-hydroxy-(5Z,8Z,11Z,14Z)-eicosatetraenoate + oxidized [NADPH--hemoprotein reductase] + H2O + H(+). It catalyses the reaction (5Z,8Z,11Z,14Z)-eicosatetraenoate + reduced [NADPH--hemoprotein reductase] + O2 = 17-hydroxy-(5Z,8Z,11Z,14Z)-eicosatetraenoate + oxidized [NADPH--hemoprotein reductase] + H2O + H(+). It carries out the reaction (5Z,8Z,11Z,14Z)-eicosatetraenoate + reduced [NADPH--hemoprotein reductase] + O2 = 18-hydroxy-(5Z,8Z,11Z,14Z)-eicosatetraenoate + oxidized [NADPH--hemoprotein reductase] + H2O + H(+). The catalysed reaction is (5Z,8Z,11Z,14Z)-eicosatetraenoate + reduced [NADPH--hemoprotein reductase] + O2 = 19-hydroxy-(5Z,8Z,11Z,14Z)-eicosatetraenoate + oxidized [NADPH--hemoprotein reductase] + H2O + H(+). The enzyme catalyses (5Z,8Z,11Z,14Z,17Z)-eicosapentaenoate + reduced [NADPH--hemoprotein reductase] + O2 = 19-hydroxy-(5Z,8Z,11Z,14Z,17Z)-eicosapentaenoate + oxidized [NADPH--hemoprotein reductase] + H2O + H(+). It catalyses the reaction (5Z,8Z,11Z,14Z)-eicosatetraenoate + reduced [NADPH--hemoprotein reductase] + O2 = (8R,9S)-epoxy-(5Z,11Z,14Z)-eicosatrienoate + oxidized [NADPH--hemoprotein reductase] + H2O + H(+). It carries out the reaction (5Z,8Z,11Z,14Z)-eicosatetraenoate + reduced [NADPH--hemoprotein reductase] + O2 = (11R,12S)-epoxy-(5Z,8Z,14Z)-eicosatrienoate + oxidized [NADPH--hemoprotein reductase] + H2O + H(+). The catalysed reaction is (5Z,8Z,11Z,14Z)-eicosatetraenoate + reduced [NADPH--hemoprotein reductase] + O2 = (14S,15R)-epoxy-(5Z,8Z,11Z)-eicosatrienoate + oxidized [NADPH--hemoprotein reductase] + H2O + H(+). The enzyme catalyses (5Z,8Z,11Z,14Z)-eicosatetraenoate + reduced [NADPH--hemoprotein reductase] + O2 = (14R,15S)-epoxy-(5Z,8Z,11Z)-eicosatrienoate + oxidized [NADPH--hemoprotein reductase] + H2O + H(+). It catalyses the reaction (5Z,8Z,11Z,14Z,17Z)-eicosapentaenoate + reduced [NADPH--hemoprotein reductase] + O2 = (17R,18S)-epoxy-(5Z,8Z,11Z,14Z)-eicosatetraenoate + oxidized [NADPH--hemoprotein reductase] + H2O + H(+). It carries out the reaction (4Z,7Z,10Z,13Z,16Z,19Z)-docosahexaenoate + reduced [NADPH--hemoprotein reductase] + O2 = (19S,20R)-epoxy-(4Z,7Z,10Z,13Z,16Z)-docosapentaenoate + oxidized [NADPH--hemoprotein reductase] + H2O + H(+). The catalysed reaction is (4Z,7Z,10Z,13Z,16Z,19Z)-docosahexaenoate + reduced [NADPH--hemoprotein reductase] + O2 = (19R,20S)-epoxy-(4Z,7Z,10Z,13Z,16Z)-docosapentaenoate + oxidized [NADPH--hemoprotein reductase] + H2O + H(+). The enzyme catalyses all-trans-retinol + reduced [NADPH--hemoprotein reductase] + O2 = all-trans-retinal + oxidized [NADPH--hemoprotein reductase] + 2 H2O + H(+). It catalyses the reaction all-trans-retinal + reduced [NADPH--hemoprotein reductase] + O2 = all-trans-retinoate + oxidized [NADPH--hemoprotein reductase] + H2O + 2 H(+). It carries out the reaction (13S)-hydroperoxy-(9Z,11E)-octadecadienoate = 13-oxo-(9Z,11E)-octadecadienoate + H2O. The catalysed reaction is (12S)-hydroperoxy-(5Z,8Z,10E,14Z)-eicosatetraenoate = 12-oxo-(5Z,8Z,10E,14Z)-eicosatetraenoate + H2O. The enzyme catalyses (15S)-hydroperoxy-(5Z,8Z,11Z,13E)-eicosatetraenoate = 15-oxo-(5Z,8Z,11Z,13E)-eicosatetraenoate + H2O. It catalyses the reaction (5S)-hydroperoxy-(6E,8Z,11Z,14Z)-eicosatetraenoate = 5-oxo-(6E,8Z,11Z,14Z)-eicosatetraenoate + H2O. Its pathway is steroid hormone biosynthesis. It participates in lipid metabolism; fatty acid metabolism. The protein operates within cofactor metabolism; retinol metabolism. Its function is as follows. A cytochrome P450 monooxygenase involved in the metabolism of various endogenous substrates, including fatty acids, steroid hormones and vitamins. Mechanistically, uses molecular oxygen inserting one oxygen atom into a substrate, and reducing the second into a water molecule, with two electrons provided by NADPH via cytochrome P450 reductase (CPR; NADPH-ferrihemoprotein reductase). Catalyzes the hydroxylation of carbon-hydrogen bonds. Exhibits high catalytic activity for the formation of hydroxyestrogens from estrone (E1) and 17beta-estradiol (E2), namely 2-hydroxy E1 and E2, as well as D-ring hydroxylated E1 and E2 at the C15alpha and C16alpha positions. Displays different regioselectivities for polyunsaturated fatty acids (PUFA) hydroxylation. Catalyzes the epoxidation of double bonds of certain PUFA. Converts arachidonic acid toward epoxyeicosatrienoic acid (EET) regioisomers, 8,9-, 11,12-, and 14,15-EET, that function as lipid mediators in the vascular system. Displays an absolute stereoselectivity in the epoxidation of eicosapentaenoic acid (EPA) producing the 17(R),18(S) enantiomer. May play an important role in all-trans retinoic acid biosynthesis in extrahepatic tissues. Catalyzes two successive oxidative transformation of all-trans retinol to all-trans retinal and then to the active form all-trans retinoic acid. May also participate in eicosanoids metabolism by converting hydroperoxide species into oxo metabolites (lipoxygenase-like reaction, NADPH-independent). In Oryctolagus cuniculus (Rabbit), this protein is Cytochrome P450 1A1 (CYP1A1).